Consider the following 682-residue polypeptide: Potassium-transporting ATPase ATP-binding subunit (682 aa).

The next 4 membrane-spanning stretches (helical) occupy residues 34–54 (PVMF…IAMA), 62–82 (ALFS…ANFA), 219–239 (IALT…TATL), and 254–274 (VLVA…LSAI). Asp-307 functions as the 4-aspartylphosphate intermediate in the catalytic mechanism. Residues Asp-344, Glu-348, 377-384 (FTAQSRMS), and Lys-395 contribute to the ATP site. Mg(2+) contacts are provided by Asp-518 and Asp-522. Helical transmembrane passes span 588–608 (FAII…LNIM), 616–636 (AILS…PLAL), and 656–676 (IYGL…DLLL).

This sequence belongs to the cation transport ATPase (P-type) (TC 3.A.3) family. Type IA subfamily. As to quaternary structure, the system is composed of three essential subunits: KdpA, KdpB and KdpC.

Its subcellular location is the cell inner membrane. The enzyme catalyses K(+)(out) + ATP + H2O = K(+)(in) + ADP + phosphate + H(+). Part of the high-affinity ATP-driven potassium transport (or Kdp) system, which catalyzes the hydrolysis of ATP coupled with the electrogenic transport of potassium into the cytoplasm. This subunit is responsible for energy coupling to the transport system and for the release of the potassium ions to the cytoplasm. This is Potassium-transporting ATPase ATP-binding subunit from Escherichia coli (strain UTI89 / UPEC).